Consider the following 164-residue polypeptide: Interleukin-31 (164 aa).

A signal peptide spans 1-23; the sequence is MASHSGPSTSVLFLFCCLGGWLA. N-linked (GlcNAc...) asparagine glycosylation is found at Asn-67 and Asn-100.

As to expression, detected at low levels in testis, bone marrow, skeletal muscle, kidney, colon, thymus, small intestine and trachea.

It is found in the secreted. In terms of biological role, activates STAT3 and possibly STAT1 and STAT5 through the IL31 heterodimeric receptor composed of IL31RA and OSMR. May function in skin immunity. Enhances myeloid progenitor cell survival in vitro. Induces RETNLA and serum amyloid A protein expression in macrophages. The chain is Interleukin-31 (IL31) from Homo sapiens (Human).